The primary structure comprises 198 residues: Pyridoxal 5'-phosphate synthase subunit PdxT (198 aa).

Position 50–52 (G50–S52) interacts with L-glutamine. The active-site Nucleophile is C82. L-glutamine is bound by residues R111 and I140–R141. Residues H177 and E179 each act as charge relay system in the active site.

Belongs to the glutaminase PdxT/SNO family. In terms of assembly, in the presence of PdxS, forms a dodecamer of heterodimers. Only shows activity in the heterodimer.

The enzyme catalyses aldehydo-D-ribose 5-phosphate + D-glyceraldehyde 3-phosphate + L-glutamine = pyridoxal 5'-phosphate + L-glutamate + phosphate + 3 H2O + H(+). The catalysed reaction is L-glutamine + H2O = L-glutamate + NH4(+). Its pathway is cofactor biosynthesis; pyridoxal 5'-phosphate biosynthesis. Catalyzes the hydrolysis of glutamine to glutamate and ammonia as part of the biosynthesis of pyridoxal 5'-phosphate. The resulting ammonia molecule is channeled to the active site of PdxS. This is Pyridoxal 5'-phosphate synthase subunit PdxT from Leifsonia xyli subsp. xyli (strain CTCB07).